The primary structure comprises 102 residues: Large ribosomal subunit protein bL21 (102 aa).

This sequence belongs to the bacterial ribosomal protein bL21 family. Part of the 50S ribosomal subunit. Contacts protein L20.

In terms of biological role, this protein binds to 23S rRNA in the presence of protein L20. In Listeria innocua serovar 6a (strain ATCC BAA-680 / CLIP 11262), this protein is Large ribosomal subunit protein bL21.